A 279-amino-acid chain; its full sequence is Indole-3-glycerol phosphate synthase (279 aa).

Belongs to the TrpC family.

It catalyses the reaction 1-(2-carboxyphenylamino)-1-deoxy-D-ribulose 5-phosphate + H(+) = (1S,2R)-1-C-(indol-3-yl)glycerol 3-phosphate + CO2 + H2O. The protein operates within amino-acid biosynthesis; L-tryptophan biosynthesis; L-tryptophan from chorismate: step 4/5. The chain is Indole-3-glycerol phosphate synthase from Ectopseudomonas mendocina (strain ymp) (Pseudomonas mendocina).